We begin with the raw amino-acid sequence, 419 residues long: Queuine tRNA-ribosyltransferase accessory subunit 2 (419 aa).

Positions 326, 328, 331, and 357 each coordinate Zn(2+).

It belongs to the queuine tRNA-ribosyltransferase family. QTRT2 subfamily. As to quaternary structure, heterodimer of a catalytic subunit and an accessory subunit. Zn(2+) serves as cofactor.

It localises to the cytoplasm. Its function is as follows. Non-catalytic subunit of the queuine tRNA-ribosyltransferase (TGT) that catalyzes the base-exchange of a guanine (G) residue with queuine (Q) at position 34 (anticodon wobble position) in tRNAs with GU(N) anticodons (tRNA-Asp, -Asn, -His and -Tyr), resulting in the hypermodified nucleoside queuosine (7-(((4,5-cis-dihydroxy-2-cyclopenten-1-yl)amino)methyl)-7-deazaguanosine). The chain is Queuine tRNA-ribosyltransferase accessory subunit 2 from Drosophila grimshawi (Hawaiian fruit fly).